The primary structure comprises 119 residues: Beta-2-microglobulin (119 aa).

The N-terminal stretch at 1-20 (MGRFVAVALLVLLSLSGLET) is a signal peptide. The 90-residue stretch at 25 to 114 (PKIQVYSRHP…VTFSTPKTVK (90 aa)) folds into the Ig-like C1-type domain. An intrachain disulfide couples cysteine 45 to cysteine 100.

It belongs to the beta-2-microglobulin family. As to quaternary structure, heterodimer of an alpha chain and a beta chain. Beta-2-microglobulin is the beta-chain of major histocompatibility complex class I molecules.

It localises to the secreted. Its function is as follows. Component of the class I major histocompatibility complex (MHC). Involved in the presentation of peptide antigens to the immune system. The sequence is that of Beta-2-microglobulin (B2M) from Callicebus personatus nigrifrons (Black-fronted titi).